A 52-amino-acid chain; its full sequence is Thiocillin (52 aa).

Positions 1 to 38 (MSEIKKALNTLEIEDFDAIEMVDVDAMPENEALEIMGA) are excised as a propeptide. A cross-link (thiazole-4-carboxylic acid (Ser-Cys)) is located at residues 39 to 40 (SC). The pyridine-2,5-dicarboxylic acid (Ser-Cys) (with S-48) cross-link spans 39–47 (SCTTCVCTC). Residues 39-48 (SCTTCVCTCS) constitute a cross-link (pyridine-2,5-dicarboxylic acid (Ser-Ser) (with C-47)). The residue at position 42 (threonine 42) is a (Z)-2,3-didehydrobutyrine. Residues 42–43 (TC) constitute a cross-link (thiazole-4-carboxylic acid (Thr-Cys)). A 3-hydroxyvaline (Val); partial modification is found at valine 44. Positions 44–45 (VC) form a cross-link, thiazole-4-carboxylic acid (Val-Cys). The residue at position 46 (threonine 46) is an O-methylthreonine; partial. Positions 46 to 47 (TC) form a cross-link, thiazole-4-carboxylic acid (Thr-Cys). Residues 48-49 (SC) constitute a cross-link (thiazole-4-carboxylic acid (Ser-Cys)). Residues 49-50 (CC) constitute a cross-link (thiazole-4-carboxylic acid (Cys-Cys)). Position 51 is a (Z)-2,3-didehydrobutyrine (threonine 51). Threonine 52 carries the 1-amino-2-propanone; alternate modification. Residue threonine 52 is modified to Decarboxylated threonine; alternate.

Belongs to the thiocillin family. In terms of processing, maturation of thiazole and oxazole containing antibiotics involves the enzymatic condensation of a Cys, Ser or Thr with the alpha-carbonyl of the preceding amino acid to form a thioether or ether bond, then dehydration to form a double bond with the alpha-amino nitrogen. Thiazoline or oxazoline ring are dehydrogenated to form thiazole or oxazole rings. Post-translationally, maturation of pyridinyl containing antibiotics involves the cross-linking of a Ser and a Cys-Ser pair usually separated by 7 or 8 residues along the peptide chain. The Ser residues are dehydrated to didehydroalanines, then bonded between their beta carbons. The alpha carbonyl of the Cys condenses with alpha carbon of the first Ser to form a pyridinyl ring. The ring may be multiply dehydrogenated to form a pyridine ring with loss of the amino nitrogen of the first Ser. The 8 possible modification isomers, differing in the presence of modifications at three positions, have been characterized in PubMed:19196969. Val-44 is modified to 3-hydroxyvaline in forms thiocillin I, thiocillin II, YM-266183, and YM-266184. Thr-46 is modified to O-methylthreonine in forms thiocillin II, thiocillin III, thiocillin IV, and YM-266184. Thr-52 is decarboxylated to (R)-1-aminopropan-2-ol in forms micrococcin P1, thiocillin I, thiocillin II, and thiocillin III. Thr-52 is decarboxylated and oxidized to 1-amino-2-propanone in forms micrococcin P2, YM-266183, YM-266184. and thiocillin IV. In terms of processing, the structure of 2,3-didehydrobutyrines is not discussed in PubMed:19196969. However, in Fig. 3 the residues are diagrammed as Z-isomers.

It is found in the secreted. In terms of biological role, has bacteriocidal activity against Gram-positive bacteria, but not against Gram-negative bacteria. Inhibits bacterial protein biosynthesis by acting on the elongation factor Tu (EF-Tu). The polypeptide is Thiocillin (Bacillus cereus (strain ATCC 14579 / DSM 31 / CCUG 7414 / JCM 2152 / NBRC 15305 / NCIMB 9373 / NCTC 2599 / NRRL B-3711)).